We begin with the raw amino-acid sequence, 216 residues long: LexA repressor (216 aa).

The segment at residues 28–48 is a DNA-binding region (H-T-H motif); it reads RAEIAAEFGFSSPNAAEEHLR. Residues S134 and K171 each act as for autocatalytic cleavage activity in the active site.

Belongs to the peptidase S24 family. Homodimer.

It carries out the reaction Hydrolysis of Ala-|-Gly bond in repressor LexA.. Its function is as follows. Represses a number of genes involved in the response to DNA damage (SOS response), including recA and lexA. In the presence of single-stranded DNA, RecA interacts with LexA causing an autocatalytic cleavage which disrupts the DNA-binding part of LexA, leading to derepression of the SOS regulon and eventually DNA repair. The protein is LexA repressor of Ralstonia nicotianae (strain ATCC BAA-1114 / GMI1000) (Ralstonia solanacearum).